The following is a 709-amino-acid chain: Elongation factor G (709 aa).

A tr-type G domain is found at 10–286 (NKVRNIGIMA…AVVDFLPSPL (277 aa)). Residues 19–26 (AHIDAGKT), 83–87 (DTPGH), and 137–140 (NKMD) contribute to the GTP site.

The protein belongs to the TRAFAC class translation factor GTPase superfamily. Classic translation factor GTPase family. EF-G/EF-2 subfamily.

It is found in the cytoplasm. Catalyzes the GTP-dependent ribosomal translocation step during translation elongation. During this step, the ribosome changes from the pre-translocational (PRE) to the post-translocational (POST) state as the newly formed A-site-bound peptidyl-tRNA and P-site-bound deacylated tRNA move to the P and E sites, respectively. Catalyzes the coordinated movement of the two tRNA molecules, the mRNA and conformational changes in the ribosome. This Corynebacterium glutamicum (strain R) protein is Elongation factor G.